The primary structure comprises 295 residues: UDP-N-acetylenolpyruvoylglucosamine reductase (295 aa).

The FAD-binding PCMH-type domain maps to 25 to 189 (RVGGPADLFA…LEALFRLDQR (165 aa)). R169 is a catalytic residue. Residue S218 is the Proton donor of the active site. Residue E288 is part of the active site.

It belongs to the MurB family. FAD serves as cofactor.

It is found in the cytoplasm. It carries out the reaction UDP-N-acetyl-alpha-D-muramate + NADP(+) = UDP-N-acetyl-3-O-(1-carboxyvinyl)-alpha-D-glucosamine + NADPH + H(+). The protein operates within cell wall biogenesis; peptidoglycan biosynthesis. Cell wall formation. In Pelobacter propionicus (strain DSM 2379 / NBRC 103807 / OttBd1), this protein is UDP-N-acetylenolpyruvoylglucosamine reductase.